A 311-amino-acid chain; its full sequence is Cytosolic Fe-S cluster assembly factor Nubp1 homolog (311 aa).

[4Fe-4S] cluster is bound by residues C9, C23, C26, and C32. 63–70 (GKGGVGKS) contributes to the ATP binding site. Positions 240 and 243 each coordinate [4Fe-4S] cluster.

The protein belongs to the Mrp/NBP35 ATP-binding proteins family. NUBP1/NBP35 subfamily. As to quaternary structure, heterotetramer of 2 Nubp1 and 2 Nubp2 chains. [4Fe-4S] cluster serves as cofactor.

The protein resides in the cytoplasm. Its function is as follows. Component of the cytosolic iron-sulfur (Fe/S) protein assembly (CIA) machinery. Required for maturation of extramitochondrial Fe-S proteins. The Nubp1-Nubp2 heterotetramer forms a Fe-S scaffold complex, mediating the de novo assembly of an Fe-S cluster and its transfer to target apoproteins. The polypeptide is Cytosolic Fe-S cluster assembly factor Nubp1 homolog (Drosophila erecta (Fruit fly)).